Consider the following 338-residue polypeptide: MANRANRHAARTEDSDNTINYVQCDGLAVMKMVKHCHEESSNMDLAQGALLGLVVDKCLEITNCFPFPKSGDETMDEELYQLTVMRRLRRVNVDHLHVGWYQSSDVGNSLSLALLESQYHYQTSIEESVVVVYDTQKSSRGFLCLKAYRLTPQAIQMYKDGDFTPEAFRTLKVGYESLFAEIPIVIKNSPLTNIMMSELNELLPEDKGHNFLDLGTATVLENQMRSLIERVDELYQEAVRYNKYQQVVFKQDTEKHRALAKLAAENAVRTSKGEPTVPEEEVIKQFRPMTAPNRLTATITSGQINTHAQHIAQFCSQSLAKLFITESLQNAKEAKETK.

The MPN domain occupies 22–154 (VQCDGLAVMK…LKAYRLTPQA (133 aa)).

The protein belongs to the eIF-3 subunit H family. As to quaternary structure, component of the eukaryotic translation initiation factor 3 (eIF-3) complex. The eIF-3 complex interacts with pix. Interacts with mxt.

The protein localises to the cytoplasm. Its function is as follows. Component of the eukaryotic translation initiation factor 3 (eIF-3) complex, which is involved in protein synthesis of a specialized repertoire of mRNAs and, together with other initiation factors, stimulates binding of mRNA and methionyl-tRNAi to the 40S ribosome. The eIF-3 complex specifically targets and initiates translation of a subset of mRNAs involved in cell proliferation. The polypeptide is Eukaryotic translation initiation factor 3 subunit H (Drosophila erecta (Fruit fly)).